A 219-amino-acid polypeptide reads, in one-letter code: MALLTPLPGSVRHGLARISGSLFIQNKTRDCGEQHAYQSGHDLLSSLPLQMMLYFNAFFFPFWIISEIITMELKFGRLSGYYQILLTTSLVILTLVESLRLYIGYVGNLHEKVPELAGFLILTLLIQLPLLLFLLTDNRNLLLPLDLAVHMIYLMFINAEIVISFLVLKTMTRQFALEYYLQQSEILVSKHVPVNRTLLRFQNTTTSIAEQYGSDALMY.

An N-linked (GlcNAc...) asparagine glycan is attached at Asn26. Helical transmembrane passes span 51–71 (MMLY…IITM), 84–104 (ILLT…LYIG), 116–136 (LAGF…FLLT), and 147–167 (LAVH…SFLV). Asn195 and Asn203 each carry an N-linked (GlcNAc...) asparagine glycan.

This sequence belongs to the TMEM17 family. In terms of assembly, part of the tectonic-like complex (also named B9 complex).

It localises to the cell projection. The protein localises to the cilium membrane. Its function is as follows. Transmembrane component of the tectonic-like complex, a complex localized at the transition zone of primary cilia and acting as a barrier that prevents diffusion of transmembrane proteins between the cilia and plasma membranes. Required for ciliogenesis and sonic hedgehog/SHH signaling. The sequence is that of Transmembrane protein 17B (Tmem17-b) from Xenopus tropicalis (Western clawed frog).